Here is a 105-residue protein sequence, read N- to C-terminus: Phosphoribosyl-ATP pyrophosphatase (105 aa).

It belongs to the PRA-PH family.

The protein resides in the cytoplasm. It carries out the reaction 1-(5-phospho-beta-D-ribosyl)-ATP + H2O = 1-(5-phospho-beta-D-ribosyl)-5'-AMP + diphosphate + H(+). It functions in the pathway amino-acid biosynthesis; L-histidine biosynthesis; L-histidine from 5-phospho-alpha-D-ribose 1-diphosphate: step 2/9. This Vesicomyosocius okutanii subsp. Calyptogena okutanii (strain HA) protein is Phosphoribosyl-ATP pyrophosphatase.